A 280-amino-acid chain; its full sequence is Urease accessory protein UreD 1 (280 aa).

This sequence belongs to the UreD family. As to quaternary structure, ureD, UreF and UreG form a complex that acts as a GTP-hydrolysis-dependent molecular chaperone, activating the urease apoprotein by helping to assemble the nickel containing metallocenter of UreC. The UreE protein probably delivers the nickel.

It is found in the cytoplasm. Required for maturation of urease via the functional incorporation of the urease nickel metallocenter. In Brucella abortus biovar 1 (strain 9-941), this protein is Urease accessory protein UreD 1.